The sequence spans 52 residues: Ovomucoid (52 aa).

A Kazal-like domain is found at 2–52 (VDCSEYPKPACPKDYRPVCGSDNKTYGNKCNFCNAVVESNGTLTLNRFGKC). 3 disulfides stabilise this stretch: Cys4/Cys34, Cys12/Cys31, and Cys20/Cys52. An N-linked (GlcNAc...) asparagine glycan is attached at Asn41.

The protein localises to the secreted. This Coturnix delegorguei (Harlequin quail) protein is Ovomucoid.